A 603-amino-acid polypeptide reads, in one-letter code: MDQPHRRTRKWHLMDLSVSTLLMSLALVLPSCVSAYQPVYFRSQEATPFIPPQVPSADPQSLSGTHEFTLRHIVQRGAYEYPELHRRLDIKPNTQLRTVSEDGIEDNEPAVFNVPFVASSEPVTIERLADRRLSVIEEHLAAARSAGSAVTLSSSQWTKDTLAGPNVTDKKTILTFAKMTANDYIEVPGTEDWQDINGKLNYSTSFGWQNDGLRGHIYADDTNSTIVISLKGTSPALFDGAGTTTNDKVNDNLYFSCCCGQGGSYLWREVCDCQKSAFNANLTCIIEAMNDENRYYRASLDLYSNVTELYPNANVWLTGHSLGGAMASLLGLTFGLPVVTFEAVPEALPAARLGLPTPPGYNPALPQARKFTGAYHFGHTADPVYMGTCNGVSSVCTWGGYAMESACHTGQMCVYDTVADKGWRVAIGTHRIKAVISDVIEVYDDLPQCAPEEECYDCELWKFFRSNGSEITTTSSTTTTSTITTSTRTTTCKTPGWWGCLDDSTTTDPPTTTTTTSSTCKTPGWFGCKDPTSTTATTTTEAPTTTTTCKDPGWFGCRDPTSPTTSTAPQTSTCETPGFFWGCYDTQTAVDHLITPAPILIDL.

Residues methionine 1–threonine 20 lie on the Cytoplasmic side of the membrane. A helical; Signal-anchor for type II membrane protein transmembrane segment spans residues leucine 21–phenylalanine 41. Residues arginine 42 to leucine 603 lie on the Lumenal side of the membrane. N-linked (GlcNAc...) asparagine glycans are attached at residues asparagine 166, asparagine 201, asparagine 223, asparagine 281, and asparagine 305. The Charge relay system role is filled by serine 321. N-linked (GlcNAc...) asparagine glycosylation is present at asparagine 467.

Belongs to the AB hydrolase superfamily. Lipase family. As to quaternary structure, binds to both phosphatidylinositol (PI) and phosphatidylinositol 3,5-bisphosphate (PIP2).

It localises to the endosome. Its subcellular location is the multivesicular body membrane. The protein resides in the prevacuolar compartment membrane. The enzyme catalyses a triacylglycerol + H2O = a diacylglycerol + a fatty acid + H(+). Functionally, lipase which is essential for lysis of subvacuolar cytoplasm to vacuole targeted bodies and intravacuolar autophagic bodies. Involved in the lysis of intravacuolar multivesicular body (MVB) vesicles. The intravacuolar membrane disintegration by atg15 is critical to life span extension. This chain is Putative lipase atg15 (atg15), found in Emericella nidulans (strain FGSC A4 / ATCC 38163 / CBS 112.46 / NRRL 194 / M139) (Aspergillus nidulans).